The following is a 74-amino-acid chain: Sodium channel neurotoxin MeuNaTxalpha-6 (74 aa).

Residues 1-7 form the signal peptide; sequence LMTGVES. An LCN-type CS-alpha/beta domain is found at 9 to 73; sequence RDAYIAKPHN…VPIRIPGKCH (65 aa). Cystine bridges form between Cys19–Cys72, Cys23–Cys45, Cys31–Cys55, and Cys35–Cys57. Arg74 is a propeptide (removed by a carboxypeptidase).

Belongs to the long (4 C-C) scorpion toxin superfamily. Sodium channel inhibitor family. Alpha subfamily. As to expression, expressed by the venom gland.

Its subcellular location is the secreted. Functionally, alpha toxins bind voltage-independently at site-3 of sodium channels (Nav) and inhibit the inactivation of the activated channels, thereby blocking neuronal transmission. This is Sodium channel neurotoxin MeuNaTxalpha-6 from Mesobuthus eupeus (Lesser Asian scorpion).